The primary structure comprises 346 residues: Mitogen-activated protein kinase kinase 1c (346 aa).

The region spanning 70–332 (LELVRFLGKG…TTDLLKHPFL (263 aa)) is the Protein kinase domain. ATP contacts are provided by residues 76 to 84 (LGKGAGGTV) and lysine 99. The Proton acceptor role is filled by aspartate 194.

It belongs to the protein kinase superfamily. STE Ser/Thr protein kinase family. MAP kinase kinase subfamily.

The catalysed reaction is L-seryl-[protein] + ATP = O-phospho-L-seryl-[protein] + ADP + H(+). It carries out the reaction L-threonyl-[protein] + ATP = O-phospho-L-threonyl-[protein] + ADP + H(+). It catalyses the reaction L-tyrosyl-[protein] + ATP = O-phospho-L-tyrosyl-[protein] + ADP + H(+). Functionally, the CERK1, MEKK1a/b, MKK1a/b/c and MPK4a/b proteins are involved in pathogen defense. The pathway induces rapid growth inhibition, cell wall depositions and accumulation of defense-related transcripts. This protein is required for full defense response to fungal pathogen chitin. The polypeptide is Mitogen-activated protein kinase kinase 1c (Physcomitrium patens (Spreading-leaved earth moss)).